The following is a 199-amino-acid chain: Large ribosomal subunit protein mL51 (199 aa).

The transit peptide at 1 to 15 (MNSNSLSRFTSIVRT) directs the protein to the mitochondrion.

The protein belongs to the mitochondrion-specific ribosomal protein mL51 family. Component of the mitochondrial ribosome large subunit (39S) which comprises a 16S rRNA and about 50 distinct proteins.

It is found in the mitochondrion. This chain is Large ribosomal subunit protein mL51 (mrpl-51), found in Caenorhabditis elegans.